The sequence spans 171 residues: Co-chaperone protein HscB homolog (171 aa).

One can recognise a J domain in the interval asparagine 2–leucine 69.

This sequence belongs to the HscB family. As to quaternary structure, interacts with HscA and stimulates its ATPase activity.

Co-chaperone involved in the maturation of iron-sulfur cluster-containing proteins. Seems to help targeting proteins to be folded toward HscA. This Acinetobacter baylyi (strain ATCC 33305 / BD413 / ADP1) protein is Co-chaperone protein HscB homolog.